Here is an 864-residue protein sequence, read N- to C-terminus: Alanine--tRNA ligase (864 aa).

Residues His-534, His-538, Cys-639, and His-643 each contribute to the Zn(2+) site.

The protein belongs to the class-II aminoacyl-tRNA synthetase family. Requires Zn(2+) as cofactor.

It localises to the cytoplasm. It carries out the reaction tRNA(Ala) + L-alanine + ATP = L-alanyl-tRNA(Ala) + AMP + diphosphate. Functionally, catalyzes the attachment of alanine to tRNA(Ala) in a two-step reaction: alanine is first activated by ATP to form Ala-AMP and then transferred to the acceptor end of tRNA(Ala). Also edits incorrectly charged Ser-tRNA(Ala) and Gly-tRNA(Ala) via its editing domain. This Onion yellows phytoplasma (strain OY-M) protein is Alanine--tRNA ligase.